The chain runs to 686 residues: Heat shock 70 kDa protein 12B (686 aa).

The disordered stretch occupies residues 12 to 53; that stretch reads LYIGSSPERSPVPSPPGSPRTQESCGIAPLTPSQSPKPEVRA. Phosphoserine is present on residues S25 and S29. Phosphothreonine is present on T42. Residues S44, S46, and S276 each carry the phosphoserine modification.

The protein belongs to the heat shock protein 70 family. In terms of tissue distribution, highest expression in muscle and heart. Lower levels in liver and kidney.

This chain is Heat shock 70 kDa protein 12B (HSPA12B), found in Homo sapiens (Human).